A 111-amino-acid chain; its full sequence is Small ribosomal subunit protein uS15c (111 aa).

It belongs to the universal ribosomal protein uS15 family. As to quaternary structure, part of the 30S ribosomal subunit.

The protein resides in the plastid. It is found in the chloroplast. This Staurastrum punctulatum (Green alga) protein is Small ribosomal subunit protein uS15c (rps15).